A 618-amino-acid chain; its full sequence is Isocitrate dehydrogenase kinase/phosphatase (618 aa).

Residues 332–338 (APGIKGM) and Lys-353 each bind ATP. Residue Asp-388 is part of the active site.

It belongs to the AceK family.

It is found in the cytoplasm. The enzyme catalyses L-seryl-[isocitrate dehydrogenase] + ATP = O-phospho-L-seryl-[isocitrate dehydrogenase] + ADP + H(+). In terms of biological role, bifunctional enzyme which can phosphorylate or dephosphorylate isocitrate dehydrogenase (IDH) on a specific serine residue. This is a regulatory mechanism which enables bacteria to bypass the Krebs cycle via the glyoxylate shunt in response to the source of carbon. When bacteria are grown on glucose, IDH is fully active and unphosphorylated, but when grown on acetate or ethanol, the activity of IDH declines drastically concomitant with its phosphorylation. In Methylibium petroleiphilum (strain ATCC BAA-1232 / LMG 22953 / PM1), this protein is Isocitrate dehydrogenase kinase/phosphatase.